The following is an 82-amino-acid chain: Exodeoxyribonuclease 7 small subunit (82 aa).

It belongs to the XseB family. Heterooligomer composed of large and small subunits.

It localises to the cytoplasm. The catalysed reaction is Exonucleolytic cleavage in either 5'- to 3'- or 3'- to 5'-direction to yield nucleoside 5'-phosphates.. Bidirectionally degrades single-stranded DNA into large acid-insoluble oligonucleotides, which are then degraded further into small acid-soluble oligonucleotides. This is Exodeoxyribonuclease 7 small subunit from Pectobacterium atrosepticum (strain SCRI 1043 / ATCC BAA-672) (Erwinia carotovora subsp. atroseptica).